Here is a 170-residue protein sequence, read N- to C-terminus: MDLRTFIRDIPDFPEKGIIFRDITPLLKDKEAFKHAIDMLAEKLSEIDFDLIVAPEARGFIFGGALSYKLNKGFIPVRKPGKLPYEVISEKYTLEYGEAELQMHVDSINKGQKVIIFDDVLATGGTAKALKKLVEKAGGEVVAMSFLIELSYLNPRDILKDENIISLIIL.

This sequence belongs to the purine/pyrimidine phosphoribosyltransferase family. As to quaternary structure, homodimer.

It is found in the cytoplasm. The enzyme catalyses AMP + diphosphate = 5-phospho-alpha-D-ribose 1-diphosphate + adenine. Its pathway is purine metabolism; AMP biosynthesis via salvage pathway; AMP from adenine: step 1/1. Functionally, catalyzes a salvage reaction resulting in the formation of AMP, that is energically less costly than de novo synthesis. This Thermosipho africanus (strain TCF52B) protein is Adenine phosphoribosyltransferase.